Reading from the N-terminus, the 409-residue chain is MSDYGFANIEEAKADAIFKLNAQYHQDEDPKKVNMSVGAYRDDTGKPWILPAVKKASKIVEEQASFNHEYLPIAGLPRFTKAAAEVLFRPNPHLLSEDRVASMQSVSGTGANFLAASFIETFYVKHTGAHVYISNPTWPVHRTLWEKLGVTVDTYPYWDAKNRSFDYEGMLSTIKSAPEGSIFLLHACAHNPTGIDPTREQWLSIFESLLSRKHLVVFDIAYQGFASGDLNRDSWALNEFVKYNKDFFVCQSFAKNMGLYGERTGCMHYVAKDASTKNKVLSQLCIVQRNTISNPPAYGARIAAEILNSPQLFAEWEQDLKTMSSRIIEMRKRLRDSLVALKTPGSWDHITQQIGMFSFTGLTPAQVQFCQERYHLYFSANGRISMAGLNNSNVEHVAQAFNHAVRELP.

Ser2 bears the N-acetylserine mark. 3 residues coordinate L-aspartate: Gly38, Trp138, and Asn191. The residue at position 255 (Lys255) is an N6-(pyridoxal phosphate)lysine. Arg383 contributes to the L-aspartate binding site. Ser385 bears the Phosphoserine mark.

It belongs to the class-I pyridoxal-phosphate-dependent aminotransferase family. In terms of assembly, homodimer. It depends on pyridoxal 5'-phosphate as a cofactor.

It localises to the cytoplasm. The enzyme catalyses L-aspartate + 2-oxoglutarate = oxaloacetate + L-glutamate. Its function is as follows. Plays a key role in amino acid metabolism. The chain is Aspartate aminotransferase, cytoplasmic from Schizosaccharomyces pombe (strain 972 / ATCC 24843) (Fission yeast).